The chain runs to 612 residues: MITSVLRYVLALYFCMGIAHGAYFSQFSMRAPDHDPCHDHTGRPVRCVPEFINAAFGKPVIASDTCGTNRPDKYCTVKEGPDGIIREQCDTCDARNHFQSHPASLLTDLNSIGNMTCWVSTPSLSPQNVSLTLSLGKKFELTYVSMHFCSRLPDSMALYKSADFGKTWTPFQFYSSECRRIFGRDPDVSITKSNEQEAVCTASHIMGPGGNRVAFPFLENRPSAQNFENSPVLQDWVTATDIKVVFSRLSPDQAELYGLSNDVNSYGNETDDEVKQRYFYSMGELAVGGRCKCNGHASRCIFDKMGRYTCDCKHNTAGTECEMCKPFHYDRPWGRATANSANSCVACNCNQHAKRCRFDAELFRLSGNRSGGVCLNCRHNTAGRNCHLCKPGFVRDTSLPMTHRKACKSCGCHPVGSLGKSCNQSSGQCVCKPGVTGTTCNRCAKGYQQSRSTVTPCIKIPTKADFIGSSHSEEQDQCSKCRIVPKRLNQKKFCKRDHAVQMVVVSREMVDGWAKYKIVVESVFKRGTENMQRGETSLWISPQGVICKCPKLRVGRRYLLLGKNDSDHERDGLMVNPQTVLVEWEDDIMDKVLRFSKKDKLGQCPEITSHRY.

Residues 1–21 (MITSVLRYVLALYFCMGIAHG) form the signal peptide. Residues 43–290 (RPVRCVPEFI…SMGELAVGGR (248 aa)) enclose the Laminin N-terminal domain. Residues N114, N128, and N268 are each glycosylated (N-linked (GlcNAc...) asparagine). C117 and C149 are joined by a disulfide. Disulfide bonds link C291/C300, C293/C310, C312/C321, C324/C344, C347/C356, C349/C374, C377/C386, C389/C407, C410/C422, C412/C429, C431/C440, C443/C457, C478/C547, and C494/C604. 3 consecutive Laminin EGF-like domains span residues 291 to 346 (CKCN…SCVA), 347 to 409 (CNCN…ACKS), and 410 to 459 (CGCH…PCIK). The N-linked (GlcNAc...) asparagine glycan is linked to N368. The N-linked (GlcNAc...) asparagine glycan is linked to N423. Residues 478 to 604 (CSKCRIVPKR…FSKKDKLGQC (127 aa)) enclose the NTR domain. Residue N564 is glycosylated (N-linked (GlcNAc...) asparagine).

In terms of assembly, binds to unc-5 and unc-40 receptors.

The protein localises to the secreted. It localises to the extracellular space. It is found in the extracellular matrix. Its subcellular location is the basement membrane. In terms of biological role, component of an extracellular matrix cue that guides dorsoventral migrations on the epidermis. Required for the guidance of pioneer axons and migrating cells along the body wall. In particular, it is required for the guidance of axons from neurons, including SubL neurons and AIY interneurons, into the nerve ring. During gonad morphogenesis, involved in distal tip cell (DTC) migration from the dorsal side of the hermaphrodite body to the midbody to allow for formation of gonad arms. Its association with either unc-40 or unc-5 receptors will lead to axon attraction or repulsion, respectively. Involved in dendritic morphogenesis; may act by association with unc-40 at the tips of growing dendrites for interaction with unc-5 on the apposing branch to induce mutual repulsion. Involved in the positioning of ray 1, the most anterior ray sensilium, in the male tail. Required for the formation of synapses between the AVA interneurons and the PHB sensory neurons. This Caenorhabditis elegans protein is Netrin unc-6.